Consider the following 265-residue polypeptide: Novel plant SNARE 11 (265 aa).

The Cytoplasmic segment spans residues 1–215 (MDPISAVSEE…IGRQVATDKC (215 aa)). A coiled-coil region spans residues 30 to 75 (QKLEKIKDANRQSRQLEELTDKMRDCKSLIKDFDREIKSLESGNDA). In terms of domain architecture, t-SNARE coiled-coil homology spans 144–206 (NSMMDDTDQA…KKASKLVKEI (63 aa)). The chain crosses the membrane as a helical; Anchor for type IV membrane protein span at residues 216–236 (IMAFLFLIVIGVIAIIIVKIV). Topologically, residues 237 to 265 (NPNNKDIRDIPGVGLAPPAMNRRLLWNHY) are vesicular.

The protein belongs to the novel plant SNARE family. Interacts with KNOLLE to form a t-SNARE complex. Does not interact with SYP21, VTI12 or VPS45. As to expression, expressed in roots, stems, flower, siliques, expanding leaves, but not in mature leaves. Not limited to dividing cells.

It is found in the membrane. Its function is as follows. t-SNARE involved in diverse vesicle trafficking and membrane fusion processes, including cell plate formation. The protein is Novel plant SNARE 11 (NPSN11) of Arabidopsis thaliana (Mouse-ear cress).